A 315-amino-acid chain; its full sequence is MVSGLGSRGNPFYGRDVLSILDFSRSDLEYLFAEADRVRRDPSAFSGELRGYVLATAFFEPSTRTRLSFQAAMLRLGGSCIDLGELEKSSIAKGENFADTVRMLDAYADVIVVRHRLEGAARFAAEVAEKPVINAGDGKRHHPTQAMLDLYSVKTLKGSVDGLVYGVLGDLKYGRAAASFILGLSLFKPRKVYLISPGLLKAREDVKEALRERGVGFEEVESPSEVIGELDVLYVTRIQRERFPDPSEYEKVRGSYVVDSKLLRNAKEGLIVLHPLPRVDEISFDVDGTPHAKYFEQARLGIPLRMALLKLVLKG.

2 residues coordinate carbamoyl phosphate: Arg-64 and Thr-65. Lys-93 contributes to the L-aspartate binding site. Residues Arg-114, His-142, and Gln-145 each contribute to the carbamoyl phosphate site. The L-aspartate site is built by Arg-175 and Arg-237. Leu-276 and Pro-277 together coordinate carbamoyl phosphate.

The protein belongs to the aspartate/ornithine carbamoyltransferase superfamily. ATCase family. Heterooligomer of catalytic and regulatory chains.

The enzyme catalyses carbamoyl phosphate + L-aspartate = N-carbamoyl-L-aspartate + phosphate + H(+). The protein operates within pyrimidine metabolism; UMP biosynthesis via de novo pathway; (S)-dihydroorotate from bicarbonate: step 2/3. In terms of biological role, catalyzes the condensation of carbamoyl phosphate and aspartate to form carbamoyl aspartate and inorganic phosphate, the committed step in the de novo pyrimidine nucleotide biosynthesis pathway. In Thermofilum pendens (strain DSM 2475 / Hrk 5), this protein is Aspartate carbamoyltransferase catalytic subunit.